A 249-amino-acid chain; its full sequence is Imidazole glycerol phosphate synthase subunit HisF (249 aa).

Catalysis depends on residues D11 and D130.

The protein belongs to the HisA/HisF family. As to quaternary structure, heterodimer of HisH and HisF.

The protein resides in the cytoplasm. The catalysed reaction is 5-[(5-phospho-1-deoxy-D-ribulos-1-ylimino)methylamino]-1-(5-phospho-beta-D-ribosyl)imidazole-4-carboxamide + L-glutamine = D-erythro-1-(imidazol-4-yl)glycerol 3-phosphate + 5-amino-1-(5-phospho-beta-D-ribosyl)imidazole-4-carboxamide + L-glutamate + H(+). Its pathway is amino-acid biosynthesis; L-histidine biosynthesis; L-histidine from 5-phospho-alpha-D-ribose 1-diphosphate: step 5/9. Its function is as follows. IGPS catalyzes the conversion of PRFAR and glutamine to IGP, AICAR and glutamate. The HisF subunit catalyzes the cyclization activity that produces IGP and AICAR from PRFAR using the ammonia provided by the HisH subunit. This Sulfolobus acidocaldarius (strain ATCC 33909 / DSM 639 / JCM 8929 / NBRC 15157 / NCIMB 11770) protein is Imidazole glycerol phosphate synthase subunit HisF.